A 323-amino-acid polypeptide reads, in one-letter code: AA9 family lytic polysaccharide monooxygenase A (323 aa).

The N-terminal stretch at 1 to 19 (MKSFISLLGLSFLTCHASA) is a signal peptide. The Cu(2+) site is built by His20 and His90. A disulfide bridge links Cys59 with Cys175. Positions 161 and 170 each coordinate O2. Residue Tyr172 coordinates Cu(2+). Residue Asn215 is glycosylated (N-linked (GlcNAc...) asparagine). One can recognise a CBM1 domain in the interval 287–323 (AVVQKFGQCGGQGWTGGTTCVAGSTCTATNAYYSQCL).

Belongs to the polysaccharide monooxygenase AA9 family. Requires Cu(2+) as cofactor.

It localises to the secreted. The enzyme catalyses [(1-&gt;4)-beta-D-glucosyl]n+m + reduced acceptor + O2 = 4-dehydro-beta-D-glucosyl-[(1-&gt;4)-beta-D-glucosyl]n-1 + [(1-&gt;4)-beta-D-glucosyl]m + acceptor + H2O.. In terms of biological role, lytic polysaccharide monooxygenase (LPMO) that depolymerizes crystalline and amorphous polysaccharides via the oxidation of scissile alpha- or beta-(1-4)-glycosidic bonds, yielding C1 and C4 oxidation products. Catalysis by LPMOs requires the reduction of the active-site copper from Cu(II) to Cu(I) by a reducing agent and H(2)O(2) or O(2) as a cosubstrate. This Botryotinia fuckeliana (strain B05.10) (Noble rot fungus) protein is AA9 family lytic polysaccharide monooxygenase A.